The primary structure comprises 475 residues: Protein EARLY HEADING DATE 2 (475 aa).

Residues M1 to N16 show a composition bias toward polar residues. Positions M1–M26 are disordered. 2 consecutive C2H2-type zinc fingers follow at residues F105–H127 and Y155–H185. 2 consecutive short sequence motifs (nuclear localization signal) follow at residues H123–P130 and I177–K184. The C2H2-type 2; degenerate zinc-finger motif lies at W190–G213. The Zn(2+) site is built by C192, C195, H208, C212, C219, C221, H234, and C238. The CCHC-type 2; atypical zinc-finger motif lies at Y217 to A240. An SHR-binding region spans residues R227–D239.

Mostly expressed in developing leaves (more in sheaths than in blades, especially in the outer epidermal cell of immature leaves and in the region immediately beneath the meristem where internodes are visible) and panicles, and, at very low levels, around the shoot apex and in roots.

Its subcellular location is the nucleus. Functionally, transcription activator that acts as a flowering master switch in both long and short days, independently of the circadian clock. Promotes flowering upstream of HD1 by up-regulating FTL1, FTL4, FTL5, FTL6, EHD1, HD3A and RFT1. Seems to repress FTL11 expression. May recognize the consensus motif 5'-TTTGTCGTAAT-3' in target gene promoters. This is Protein EARLY HEADING DATE 2 from Oryza sativa subsp. japonica (Rice).